The primary structure comprises 224 residues: Ribose-5-phosphate isomerase A 2 (224 aa).

Residues 27–30 (SGST), 83–86 (DGTD), and 96–99 (KGGG) each bind substrate. Glu-105 serves as the catalytic Proton acceptor. Lys-123 contributes to the substrate binding site.

The protein belongs to the ribose 5-phosphate isomerase family. As to quaternary structure, homodimer.

It catalyses the reaction aldehydo-D-ribose 5-phosphate = D-ribulose 5-phosphate. It participates in carbohydrate degradation; pentose phosphate pathway; D-ribose 5-phosphate from D-ribulose 5-phosphate (non-oxidative stage): step 1/1. Functionally, catalyzes the reversible conversion of ribose-5-phosphate to ribulose 5-phosphate. The protein is Ribose-5-phosphate isomerase A 2 of Oceanobacillus iheyensis (strain DSM 14371 / CIP 107618 / JCM 11309 / KCTC 3954 / HTE831).